A 195-amino-acid chain; its full sequence is Cytochrome c oxidase subunit 1 (195 aa).

Residues 12-32 traverse the membrane as a helical segment; sequence MYWVLGFIFLFTLGGLTGIVL. Mg(2+)-binding residues include His-42 and Asp-43. His-50 is a binding site for heme a3. His-52 provides a ligand contact to Fe(II)-heme a. The next 3 helical transmembrane spans lie at 59 to 79, 88 to 108, and 131 to 151; these read AVFAIFAGFNFWFPVMTGLVL, FIVMFIAVNMTFFPQHFLGLA, and GSLMSVFAVLLFVLIVWEAFL.

It belongs to the heme-copper respiratory oxidase family. In terms of assembly, component of the cytochrome c oxidase (complex IV, CIV), a multisubunit enzyme composed of a catalytic core of 3 subunits and several supernumerary subunits. The complex exists as a monomer or a dimer and forms supercomplexes (SCs) in the inner mitochondrial membrane with ubiquinol-cytochrome c oxidoreductase (cytochrome b-c1 complex, complex III, CIII). Requires heme as cofactor. It depends on Cu cation as a cofactor.

It localises to the mitochondrion inner membrane. It catalyses the reaction 4 Fe(II)-[cytochrome c] + O2 + 8 H(+)(in) = 4 Fe(III)-[cytochrome c] + 2 H2O + 4 H(+)(out). It participates in energy metabolism; oxidative phosphorylation. Functionally, component of the cytochrome c oxidase, the last enzyme in the mitochondrial electron transport chain which drives oxidative phosphorylation. The respiratory chain contains 3 multisubunit complexes succinate dehydrogenase (complex II, CII), ubiquinol-cytochrome c oxidoreductase (cytochrome b-c1 complex, complex III, CIII) and cytochrome c oxidase (complex IV, CIV), that cooperate to transfer electrons derived from NADH and succinate to molecular oxygen, creating an electrochemical gradient over the inner membrane that drives transmembrane transport and the ATP synthase. Cytochrome c oxidase is the component of the respiratory chain that catalyzes the reduction of oxygen to water. Electrons originating from reduced cytochrome c in the intermembrane space (IMS) are transferred via the dinuclear copper A center (CU(A)) of subunit 2 and heme A of subunit 1 to the active site in subunit 1, a binuclear center (BNC) formed by heme A3 and copper B (CU(B)). The BNC reduces molecular oxygen to 2 water molecules using 4 electrons from cytochrome c in the IMS and 4 protons from the mitochondrial matrix. The sequence is that of Cytochrome c oxidase subunit 1 (COI) from Albinaria turrita (Door snail).